Reading from the N-terminus, the 143-residue chain is Small ribosomal subunit protein uS12 (143 aa).

Basic residues predominate over residues 1–19 (MGKPKGIRAARKLKTHRQA). The tract at residues 1–21 (MGKPKGIRAARKLKTHRQAQR) is disordered. Pro62 bears the Hydroxyproline mark.

Belongs to the universal ribosomal protein uS12 family. As to quaternary structure, component of the 40S small ribosomal subunit.

It is found in the cytoplasm. Its subcellular location is the cytosol. The protein resides in the rough endoplasmic reticulum. The chain is Small ribosomal subunit protein uS12 (rps-23) from Brugia malayi (Filarial nematode worm).